The following is a 327-amino-acid chain: MRPPGFWSRPPTHPLARILAPVGRIYGGLTADRMDRPGAAPPCPVLCVGNFTLGGAGKTPTALALAGLLRDLGRTPAFLSRGYGGRLSGPVIVDPARHRAEEVGDEPLLLARAATAVVARDRPAGARLCAGSGADVIVMDDGLQNPSLSKSLSLAVIDGGAVIGNGLPFPAGPLRAPLLRQWRHVAGLVLIGEGMAGSGVAAEAEAQGLPVHRARLVPEGGADWAGRRVVAFAGIGRPQKFFETLRALGAEIVAERAFPDHHPYRPRDWAALTALAAREGGDLVTTAKDAVRLPPEARGAVAVLTVALAFDDEAGLRRQLAAALPRA.

ATP is bound at residue 52 to 59 (TLGGAGKT).

Belongs to the LpxK family.

It carries out the reaction a lipid A disaccharide + ATP = a lipid IVA + ADP + H(+). The protein operates within glycolipid biosynthesis; lipid IV(A) biosynthesis; lipid IV(A) from (3R)-3-hydroxytetradecanoyl-[acyl-carrier-protein] and UDP-N-acetyl-alpha-D-glucosamine: step 6/6. Transfers the gamma-phosphate of ATP to the 4'-position of a tetraacyldisaccharide 1-phosphate intermediate (termed DS-1-P) to form tetraacyldisaccharide 1,4'-bis-phosphate (lipid IVA). The chain is Tetraacyldisaccharide 4'-kinase from Methylorubrum populi (strain ATCC BAA-705 / NCIMB 13946 / BJ001) (Methylobacterium populi).